We begin with the raw amino-acid sequence, 214 residues long: Probable nicotinate-nucleotide adenylyltransferase (214 aa).

This sequence belongs to the NadD family.

It catalyses the reaction nicotinate beta-D-ribonucleotide + ATP + H(+) = deamido-NAD(+) + diphosphate. The protein operates within cofactor biosynthesis; NAD(+) biosynthesis; deamido-NAD(+) from nicotinate D-ribonucleotide: step 1/1. In terms of biological role, catalyzes the reversible adenylation of nicotinate mononucleotide (NaMN) to nicotinic acid adenine dinucleotide (NaAD). The sequence is that of Probable nicotinate-nucleotide adenylyltransferase from Aeromonas hydrophila subsp. hydrophila (strain ATCC 7966 / DSM 30187 / BCRC 13018 / CCUG 14551 / JCM 1027 / KCTC 2358 / NCIMB 9240 / NCTC 8049).